Consider the following 234-residue polypeptide: MIFTNAILVISALLPATVLSLQHTEDSLFPARCWPDPCAGITFQNDTYVCGDPRLGPVVLPQKFPLNNELRTYARFGALCPAEFLDKWATDVAPNGTYIYPPANGFALDTEEQPILGNATLPVGMKLDRFGSEYGTFLAPLGAPYIERSLPPSNLNTFDGMYPYNYHVYQVTKEFVVGLGPIAPWFEQPGMGTQFVTYTNVLGLIDDGYLRRLDESEYDEKVEYSNPYTPGPNQ.

A signal peptide spans 1-20 (MIFTNAILVISALLPATVLS). A thump region spans residues 21-117 (LQHTEDSLFP…LDTEEQPILG (97 aa)). Intrachain disulfides connect Cys-33/Cys-80 and Cys-38/Cys-50. Residues Asn-45, Asn-95, and Asn-118 are each glycosylated (N-linked (GlcNAc...) asparagine). Residues 120–212 (TLPVGMKLDR…GLIDDGYLRR (93 aa)) enclose the TNT domain. The active site involves Arg-129. 3 residues coordinate NAD(+): Phe-130, Thr-136, and Arg-148. The active site involves Gln-194. Ser-216, Asp-219, Glu-220, and Glu-223 together coordinate Ca(2+).

This sequence belongs to the fungal surface NADase family. Homodimer. In terms of processing, N-glycosylated.

It localises to the secreted. It catalyses the reaction NAD(+) + H2O = ADP-D-ribose + nicotinamide + H(+). It carries out the reaction NADP(+) + H2O = ADP-D-ribose 2'-phosphate + nicotinamide + H(+). The catalytic activity is positively regulated by calcium via its binding to the calcium-binding site. Functionally, conidial surface nicotinamide adenine dinucleotide glycohydrolase that cleave NAD(+) and NADP(+) but not their reduced counterparts, NADH and NADPH. Lacks both ADP-ribosyl cyclase and base exchange activity and does not mediate synthesis of calcium messengers cADPR or NAADP. Plays a role in pathogenicity by depleting the host's NAD(+) pool. In Aspergillus fumigatus (strain ATCC MYA-4609 / CBS 101355 / FGSC A1100 / Af293) (Neosartorya fumigata), this protein is Conidial surface nicotinamide adenine dinucleotide glycohydrolase nadA.